A 161-amino-acid chain; its full sequence is Nucleotide-binding protein PFL_4775 (161 aa).

The protein belongs to the YajQ family.

Its function is as follows. Nucleotide-binding protein. The protein is Nucleotide-binding protein PFL_4775 of Pseudomonas fluorescens (strain ATCC BAA-477 / NRRL B-23932 / Pf-5).